The following is a 362-amino-acid chain: Outer membrane porin F (362 aa).

An N-terminal signal peptide occupies residues 1–22 (MMKRNILAVIVPALLVAGTANA).

The protein belongs to the Gram-negative porin family. Homotrimer. Forms mixed heterotrimers with OmpC; other mixed heterotrimers are also probable.

It localises to the cell outer membrane. In terms of biological role, forms pores that allow passive diffusion of small molecules across the outer membrane. Functionally, (Microbial infection) Is the major receptor for colicin E5. Its function is as follows. (Microbial infection) A mixed OmpC-OmpF heterotrimer is the outer membrane receptor for toxin CdiA-EC536. The sequence is that of Outer membrane porin F (ompF) from Escherichia coli O6:K15:H31 (strain 536 / UPEC).